Consider the following 274-residue polypeptide: Dermonecrotic toxin LarSicTox-alphaIB2bii (274 aa).

Residue His-3 is part of the active site. Glu-23 and Asp-25 together coordinate Mg(2+). His-39 functions as the Nucleophile in the catalytic mechanism. Intrachain disulfides connect Cys-43/Cys-49 and Cys-45/Cys-188. Asp-83 contributes to the Mg(2+) binding site. An N-linked (GlcNAc...) asparagine glycan is attached at Asn-251.

This sequence belongs to the arthropod phospholipase D family. Class II subfamily. The cofactor is Mg(2+). As to expression, expressed by the venom gland.

It is found in the secreted. It catalyses the reaction an N-(acyl)-sphingosylphosphocholine = an N-(acyl)-sphingosyl-1,3-cyclic phosphate + choline. The catalysed reaction is an N-(acyl)-sphingosylphosphoethanolamine = an N-(acyl)-sphingosyl-1,3-cyclic phosphate + ethanolamine. The enzyme catalyses a 1-acyl-sn-glycero-3-phosphocholine = a 1-acyl-sn-glycero-2,3-cyclic phosphate + choline. It carries out the reaction a 1-acyl-sn-glycero-3-phosphoethanolamine = a 1-acyl-sn-glycero-2,3-cyclic phosphate + ethanolamine. In terms of biological role, dermonecrotic toxins cleave the phosphodiester linkage between the phosphate and headgroup of certain phospholipids (sphingolipid and lysolipid substrates), forming an alcohol (often choline) and a cyclic phosphate. This toxin acts on sphingomyelin (SM). It may also act on ceramide phosphoethanolamine (CPE), lysophosphatidylcholine (LPC) and lysophosphatidylethanolamine (LPE), but not on lysophosphatidylserine (LPS), and lysophosphatidylglycerol (LPG). It acts by transphosphatidylation, releasing exclusively cyclic phosphate products as second products. Induces dermonecrosis, hemolysis, increased vascular permeability, edema, inflammatory response, and platelet aggregation. The protein is Dermonecrotic toxin LarSicTox-alphaIB2bii of Loxosceles arizonica (Arizona brown spider).